A 357-amino-acid chain; its full sequence is MGSLDAKPAAATQEVSIKDQAQLWNIIYGFADSLVLRCAVEIGIADIIKNNDGAITLAQLAAKLPITNVSSDYLYRMVRYLVHLNIIEQETCNGGVEKVYSLKPVGTLLLRDAERSMVPMILGMTQKDFMVSWHFMKEGLGNGSTTAFEKGMGMDIWKYLEGNPDQSQLFNEGMAGETRLLTKTLIEDCRDTFQGLDSLVDIGGGNGTTIKAIYEAFPHIKCTLYDLPHVVANSHDLPNIEKVPGDMFKSVPSAQAILLKLILHDWTDEECVNILKKCKEAIPKETGKVIIVDVALEEESNHELTKTRLILDIDMLVNTGGRERTADDWENLLKRAGFRSHKIRPIRAIQSVIEAFP.

Residue D226 coordinates S-adenosyl-L-methionine. Catalysis depends on H264, which acts as the Proton acceptor.

It belongs to the class I-like SAM-binding methyltransferase superfamily. Cation-independent O-methyltransferase family. COMT subfamily. Homodimer. Expressed in roots, stems, leaves and flowers.

The enzyme catalyses (S)-3'-hydroxy-N-methylcoclaurine + S-adenosyl-L-methionine = (S)-reticuline + S-adenosyl-L-homocysteine + H(+). The protein operates within alkaloid biosynthesis; (S)-reticuline biosynthesis; (S)-reticuline from (S)-norcoclaurine: step 4/4. Functionally, involved in the biosynthesis of benzylisoquinoline alkaloids. Catalyzes the transfer of the methyl group to the 4'-hydroxyl group of 3'-hydroxy-N-methylcoclaurine to form reticuline. Can also use laudanosoline and, with a lower activity, 6-O-methylnorlaudanosoline and norlaudanosoline as substrates. Also involved in the papaverine biosynthesis. This is 3'-hydroxy-N-methyl-(S)-coclaurine 4'-O-methyltransferase 2 from Papaver somniferum (Opium poppy).